A 1935-amino-acid polypeptide reads, in one-letter code: Myosin-7 (1935 aa).

Residues D32–P81 form the Myosin N-terminal SH3-like domain. In terms of domain architecture, Myosin motor spans D85 to D778. K129 carries the post-translational modification N6,N6,N6-trimethyllysine. G178–T185 contributes to the ATP binding site. T378 is subject to Phosphothreonine. Actin-binding stretches follow at residues L655–E677 and K757–G771. In terms of domain architecture, IQ spans L781–S810. A coiled-coil region spans residues L839–E1935. Phosphoserine occurs at positions 1137 and 1269. T1282 carries the phosphothreonine modification. Y1308 is subject to Phosphotyrosine. T1309 is subject to Phosphothreonine. Residue S1510 is modified to Phosphoserine. At T1513 the chain carries Phosphothreonine. The segment at E1907–E1935 is disordered. Basic and acidic residues predominate over residues K1923–E1935.

The protein belongs to the TRAFAC class myosin-kinesin ATPase superfamily. Myosin family. Muscle myosin is a hexameric protein that consists of 2 heavy chain subunits (MHC), 2 alkali light chain subunits (MLC) and 2 regulatory light chain subunits (MLC-2). Interacts with ECPAS. Interacts (via C-terminus) with LRRC39.

It is found in the cytoplasm. It localises to the myofibril. Its subcellular location is the sarcomere. Functionally, myosins are actin-based motor molecules with ATPase activity essential for muscle contraction. Forms regular bipolar thick filaments that, together with actin thin filaments, constitute the fundamental contractile unit of skeletal and cardiac muscle. The polypeptide is Myosin-7 (MYH7) (Bos taurus (Bovine)).